The sequence spans 263 residues: 4-hydroxy-2-oxo-heptane-1,7-dioate aldolase (263 aa).

The Proton acceptor role is filled by H45. Residue Q147 participates in substrate binding. Residue E149 participates in a divalent metal cation binding. 2 residues coordinate substrate: A174 and D175. D175 provides a ligand contact to a divalent metal cation.

The protein belongs to the HpcH/HpaI aldolase family. As to quaternary structure, homohexamer; trimer of dimers. A divalent metal cation serves as cofactor.

The enzyme catalyses 4-hydroxy-2-oxoheptanedioate = succinate semialdehyde + pyruvate. Its pathway is aromatic compound metabolism; 4-hydroxyphenylacetate degradation; pyruvate and succinate semialdehyde from 4-hydroxyphenylacetate: step 7/7. In terms of biological role, catalyzes the reversible retro-aldol cleavage of 4-hydroxy-2-ketoheptane-1,7-dioate (HKHD) to pyruvate and succinic semialdehyde. The protein is 4-hydroxy-2-oxo-heptane-1,7-dioate aldolase of Salmonella arizonae (strain ATCC BAA-731 / CDC346-86 / RSK2980).